The primary structure comprises 180 residues: Shikimate kinase (180 aa).

14-19 serves as a coordination point for ATP; the sequence is GAGKST. Ser-18 is a binding site for Mg(2+). 3 residues coordinate substrate: Asp-36, Arg-60, and Gly-82. Position 120 (Arg-120) interacts with ATP. Substrate is bound at residue Arg-140. Gln-157 contributes to the ATP binding site.

The protein belongs to the shikimate kinase family. Monomer. The cofactor is Mg(2+).

It is found in the cytoplasm. It catalyses the reaction shikimate + ATP = 3-phosphoshikimate + ADP + H(+). It functions in the pathway metabolic intermediate biosynthesis; chorismate biosynthesis; chorismate from D-erythrose 4-phosphate and phosphoenolpyruvate: step 5/7. In terms of biological role, catalyzes the specific phosphorylation of the 3-hydroxyl group of shikimic acid using ATP as a cosubstrate. This chain is Shikimate kinase, found in Haemophilus influenzae (strain PittEE).